The chain runs to 157 residues: Thioredoxin 2 (157 aa).

Positions 1–23 are cleaved as a signal peptide; sequence MKKYIFFFLFSFINFFFVYDVTC. The 112-residue stretch at 46–157 folds into the Thioredoxin domain; sequence LRMFKKVPRL…DLIALIKKHL (112 aa). Residues Cys82 and Cys85 each act as nucleophile in the active site. Cys82 and Cys85 are disulfide-bonded.

It belongs to the thioredoxin family. Monomer. Component of the Plasmodium translocon of exported proteins (PTEX) complex composed of HSP101, EXP2, PTEX150, PTEX88 and TRX2. The disulfide bond between Cys-82 and Cys-85 acts as a redox-active center and is reduced by thioredoxin reductase TRXR.

The protein localises to the parasitophorous vacuole membrane. In terms of biological role, participates in various redox reactions through the reversible oxidation of its active center dithiol to a disulfide and catalyzes dithiol-disulfide exchange reactions. As part of the translocon PTEX complex, plays a role in the export of parasite proteins into the host erythrocyte. The translocon PTEX complex is a multi-protein machinery resident in the parasite parasitophorous vacuolar membrane, responsible for protein secretion into host cells. May contribute to the unfolding of proteins containing the PEXEL localization motif before their passage through the translocon or regulate the PTEX complex function. The chain is Thioredoxin 2 from Plasmodium falciparum (isolate 3D7).